The chain runs to 176 residues: Peptide deformylase (176 aa).

Fe cation contacts are provided by cysteine 92 and histidine 134. The active site involves glutamate 135. Histidine 138 contacts Fe cation.

This sequence belongs to the polypeptide deformylase family. Fe(2+) serves as cofactor.

The catalysed reaction is N-terminal N-formyl-L-methionyl-[peptide] + H2O = N-terminal L-methionyl-[peptide] + formate. Functionally, removes the formyl group from the N-terminal Met of newly synthesized proteins. Requires at least a dipeptide for an efficient rate of reaction. N-terminal L-methionine is a prerequisite for activity but the enzyme has broad specificity at other positions. In Acinetobacter baumannii (strain SDF), this protein is Peptide deformylase.